The following is a 100-amino-acid chain: Aspartyl/glutamyl-tRNA(Asn/Gln) amidotransferase subunit C (100 aa).

The protein belongs to the GatC family. In terms of assembly, heterotrimer of A, B and C subunits.

It carries out the reaction L-glutamyl-tRNA(Gln) + L-glutamine + ATP + H2O = L-glutaminyl-tRNA(Gln) + L-glutamate + ADP + phosphate + H(+). The catalysed reaction is L-aspartyl-tRNA(Asn) + L-glutamine + ATP + H2O = L-asparaginyl-tRNA(Asn) + L-glutamate + ADP + phosphate + 2 H(+). Its function is as follows. Allows the formation of correctly charged Asn-tRNA(Asn) or Gln-tRNA(Gln) through the transamidation of misacylated Asp-tRNA(Asn) or Glu-tRNA(Gln) in organisms which lack either or both of asparaginyl-tRNA or glutaminyl-tRNA synthetases. The reaction takes place in the presence of glutamine and ATP through an activated phospho-Asp-tRNA(Asn) or phospho-Glu-tRNA(Gln). The chain is Aspartyl/glutamyl-tRNA(Asn/Gln) amidotransferase subunit C from Rickettsia peacockii (strain Rustic).